The primary structure comprises 331 residues: D-galactose/methyl-galactoside binding periplasmic protein MglB (331 aa).

An N-terminal signal peptide occupies residues 1–24 (MKKTAVLSTVAFAIALGSASASFA). 2 residues coordinate beta-D-galactose: Asp-38 and Asn-115. Beta-D-glucose contacts are provided by Asp-38 and Asn-115. The Ca(2+) site is built by Asp-158, Asn-160, Asp-162, Lys-164, and Gln-166. Positions 176, 178, and 182 each coordinate beta-D-galactose. Residues His-176, Asp-178, and Arg-182 each coordinate beta-D-glucose. Position 229 (Glu-229) interacts with Ca(2+). 3 residues coordinate beta-D-galactose: Asn-235, Asp-259, and Asn-279. Residues Asn-235, Asp-259, and Asn-279 each contribute to the beta-D-glucose site.

The protein belongs to the bacterial solute-binding protein 2 family. In terms of assembly, the ABC transporter complex is composed of one ATP-binding protein (MglA), two transmembrane proteins (MglC) and a solute-binding protein (MglB).

The protein localises to the periplasm. Functionally, part of the ABC transporter complex MglABC involved in galactose/methyl galactoside import. This Haemophilus influenzae (strain ATCC 51907 / DSM 11121 / KW20 / Rd) protein is D-galactose/methyl-galactoside binding periplasmic protein MglB (mglB).